We begin with the raw amino-acid sequence, 208 residues long: Uracil phosphoribosyltransferase (208 aa).

5-phospho-alpha-D-ribose 1-diphosphate is bound by residues R78, R103, and 130–138; that span reads DPMLATGGS. Residues I193 and 198 to 200 each bind uracil; that span reads GDA. Residue D199 participates in 5-phospho-alpha-D-ribose 1-diphosphate binding.

This sequence belongs to the UPRTase family. It depends on Mg(2+) as a cofactor.

The catalysed reaction is UMP + diphosphate = 5-phospho-alpha-D-ribose 1-diphosphate + uracil. It functions in the pathway pyrimidine metabolism; UMP biosynthesis via salvage pathway; UMP from uracil: step 1/1. Its activity is regulated as follows. Allosterically activated by GTP. Catalyzes the conversion of uracil and 5-phospho-alpha-D-ribose 1-diphosphate (PRPP) to UMP and diphosphate. The protein is Uracil phosphoribosyltransferase of Salmonella agona (strain SL483).